The sequence spans 198 residues: Penicillin-binding protein activator LpoB (198 aa).

The first 19 residues, 1-19, serve as a signal peptide directing secretion; that stretch reads MIRSVNRTGALMMALILSG. C20 is lipidated: N-palmitoyl cysteine. Residue C20 is the site of S-diacylglycerol cysteine attachment. Residues 26–37 are compositionally biased toward low complexity; it reads QPAPVEPTQPVE. The interval 26–59 is disordered; it reads QPAPVEPTQPVEPVQPVPQPEQPIPQPQPVPQPP. Positions 38–59 are enriched in pro residues; that stretch reads PVQPVPQPEQPIPQPQPVPQPP.

Belongs to the LpoB family. As to quaternary structure, interacts with PBP1b.

The protein localises to the cell outer membrane. Regulator of peptidoglycan synthesis that is essential for the function of penicillin-binding protein 1B (PBP1b). In Pantoea ananatis (strain LMG 20103), this protein is Penicillin-binding protein activator LpoB.